Here is a 297-residue protein sequence, read N- to C-terminus: Polyhedral envelope protein (297 aa).

The protein belongs to the baculoviridae PE family.

It is found in the virion membrane. In terms of biological role, major component of the polyhedra envelope. The protein is Polyhedral envelope protein of Orgyia pseudotsugata (Douglas-fir tussock moth).